The chain runs to 307 residues: tRNA-cytidine(32) 2-sulfurtransferase (307 aa).

The PP-loop motif motif lies at 44-49 (SGGKDS). [4Fe-4S] cluster-binding residues include cysteine 119, cysteine 122, and cysteine 210.

Belongs to the TtcA family. As to quaternary structure, homodimer. Requires Mg(2+) as cofactor. [4Fe-4S] cluster is required as a cofactor.

It is found in the cytoplasm. The enzyme catalyses cytidine(32) in tRNA + S-sulfanyl-L-cysteinyl-[cysteine desulfurase] + AH2 + ATP = 2-thiocytidine(32) in tRNA + L-cysteinyl-[cysteine desulfurase] + A + AMP + diphosphate + H(+). It functions in the pathway tRNA modification. In terms of biological role, catalyzes the ATP-dependent 2-thiolation of cytidine in position 32 of tRNA, to form 2-thiocytidine (s(2)C32). The sulfur atoms are provided by the cysteine/cysteine desulfurase (IscS) system. This Aliivibrio fischeri (strain ATCC 700601 / ES114) (Vibrio fischeri) protein is tRNA-cytidine(32) 2-sulfurtransferase.